The primary structure comprises 175 residues: Nascent polypeptide-associated complex subunit beta (175 aa).

Disordered regions lie at residues methionine 1 to aspartate 36 and arginine 129 to glutamate 175. The NAC-A/B domain occupies glutamine 34–valine 101. The segment covering glutamate 149–glutamate 163 has biased composition (acidic residues). Basic and acidic residues predominate over residues alanine 164–glutamate 175.

This sequence belongs to the NAC-beta family. As to quaternary structure, part of the nascent polypeptide-associated complex (NAC), consisting of EGD2 and EGD1. NAC associates with ribosomes via EGD1.

It localises to the cytoplasm. The protein localises to the nucleus. Functionally, component of the nascent polypeptide-associated complex (NAC), a dynamic component of the ribosomal exit tunnel, protecting the emerging polypeptides from interaction with other cytoplasmic proteins to ensure appropriate nascent protein targeting. The NAC complex also promotes mitochondrial protein import by enhancing productive ribosome interactions with the outer mitochondrial membrane and blocks the inappropriate interaction of ribosomes translating non-secretory nascent polypeptides with translocation sites in the membrane of the endoplasmic reticulum. EGD1 may act as a transcription factor that exert a negative effect on the expression of several genes that are transcribed by RNA polymerase II. This is Nascent polypeptide-associated complex subunit beta (EGD1) from Cryptococcus neoformans var. neoformans serotype D (strain B-3501A) (Filobasidiella neoformans).